We begin with the raw amino-acid sequence, 86 residues long: UPF0457 protein SAUSA300_2132 (86 aa).

It belongs to the UPF0457 family.

This chain is UPF0457 protein SAUSA300_2132, found in Staphylococcus aureus (strain USA300).